Consider the following 29-residue polypeptide: GLMSTLKGAATNVAVTLLNKLQCKLTGTC.

Residues Cys23 and Cys29 are joined by a disulfide bond.

Expressed by the skin glands.

Its subcellular location is the secreted. In terms of biological role, antimicrobial peptide. In Pelophylax ridibundus (Marsh frog), this protein is Brevinin-2Rc.